The sequence spans 42 residues: Serine/threonine-protein phosphatase 5 (42 aa).

The interval 38–42 (QLGVM) is required for autoinhibition.

Belongs to the PPP phosphatase family. PP-5 (PP-T) subfamily. In terms of assembly, probably forms a complex composed of chaperones HSP90 and HSP70, co-chaperones STIP1/HOP, CDC37, PPP5C, PTGES3/p23, TSC1 and client protein TSC2. Probably forms a complex composed of chaperones HSP90 and HSP70, co-chaperones CDC37, PPP5C, TSC1 and client protein TSC2, CDK4, AKT, RAF1 and NR3C1; this complex does not contain co-chaperones STIP1/HOP and PTGES3/p23. Part of a complex with HSP90/HSP90AA1 and steroid receptors. Interacts (via TPR repeats) with HSP90AA1 (via TPR repeat-binding motif) or HSPA1A/HSPA1B; the interaction is direct and activates the phosphatase activity. Dissociates from HSPA1A/HSPA1B and HSP90AA1 in response to arachidonic acid. Interacts with CPNE1 (via VWFA domain). Interacts with CDC16, CDC27. Interacts with KLHDC10 (via the 6 Kelch repeats); inhibits the phosphatase activity on MAP3K5. Interacts with ATM and ATR; both interactions are induced by DNA damage and enhance ATM and ATR kinase activity. Interacts with RAD17; reduced by DNA damage. Interacts with nuclear receptors such as NR3C1/GCR and PPARG (activated by agonist); regulates their transactivation activities. Interacts (via TPR repeats) with S100 proteins S100A1, S100A2, S100A6, S100B and S100P; the interactions are calcium-dependent, strongly activate PPP5C phosphatase activity and compete with HSP90AA1 and MAP3K5 interactions. Interacts with SMAD2 and SMAD3 but not with SMAD1; decreases SMAD3 phosphorylation and protein levels. Interacts (via TPR repeats) with CRY1 and CRY2; the interaction with CRY2 down-regulates the phosphatase activity on CSNK1E. Interacts (via TPR repeats) with the active form of RAC1, GNA12 or GNA13; these interactions activate the phosphatase activity and translocate PPP5C to the cell membrane. Interacts with FLCN. Mg(2+) is required as a cofactor. It depends on Mn(2+) as a cofactor. In terms of processing, activated by at least two different proteolytic cleavages producing a 56 kDa and a 50 kDa form.

It is found in the nucleus. The protein resides in the cytoplasm. The protein localises to the cell membrane. The enzyme catalyses O-phospho-L-seryl-[protein] + H2O = L-seryl-[protein] + phosphate. It carries out the reaction O-phospho-L-threonyl-[protein] + H2O = L-threonyl-[protein] + phosphate. Autoinhibited. In the autoinhibited state, the TPR domain interacts with the catalytic region and prevents substrate access to the catalytic pocket. Allosterically activated by various polyunsaturated fatty acids, free long-chain fatty-acids and long-chain fatty acyl-CoA esters, arachidonic acid being the most effective activator. HSP90A and probably RAC1, GNA12 and GNA13 can also release the autoinhibition by the TPR repeat. Activation by RAC1, GNA12 and GNA13 is synergistic with the one produced by fatty acids binding. Inhibited by okadaic acid. Its function is as follows. Serine/threonine-protein phosphatase that dephosphorylates a myriad of proteins involved in different signaling pathways including the kinases CSNK1E, ASK1/MAP3K5, PRKDC and RAF1, the nuclear receptors NR3C1, PPARG, ESR1 and ESR2, SMAD proteins and TAU/MAPT. Implicated in wide ranging cellular processes, including apoptosis, differentiation, DNA damage response, cell survival, regulation of ion channels or circadian rhythms, in response to steroid and thyroid hormones, calcium, fatty acids, TGF-beta as well as oxidative and genotoxic stresses. Participates in the control of DNA damage response mechanisms such as checkpoint activation and DNA damage repair through, for instance, the regulation ATM/ATR-signaling and dephosphorylation of PRKDC and TP53BP1. Inhibits ASK1/MAP3K5-mediated apoptosis induced by oxidative stress. Plays a positive role in adipogenesis, mainly through the dephosphorylation and activation of PPARG transactivation function. Also dephosphorylates and inhibits the anti-adipogenic effect of NR3C1. Regulates the circadian rhythms, through the dephosphorylation and activation of CSNK1E. May modulate TGF-beta signaling pathway by the regulation of SMAD3 phosphorylation and protein expression levels. Dephosphorylates and may play a role in the regulation of TAU/MAPT. Through their dephosphorylation, may play a role in the regulation of ions channels such as KCNH2. Dephosphorylate FNIP1, disrupting interaction with HSP90AA1/Hsp90. This is Serine/threonine-protein phosphatase 5 (PPP5C) from Oryctolagus cuniculus (Rabbit).